We begin with the raw amino-acid sequence, 264 residues long: Glutamate racemase (264 aa).

Substrate is bound by residues 10–11 and 42–43; these read DS and YG. The Proton donor/acceptor role is filled by Cys73. Residue 74–75 coordinates substrate; sequence NT. Residue Cys183 is the Proton donor/acceptor of the active site. 184 to 185 contacts substrate; it reads TH.

It belongs to the aspartate/glutamate racemases family.

The catalysed reaction is L-glutamate = D-glutamate. Its pathway is cell wall biogenesis; peptidoglycan biosynthesis. Its function is as follows. Provides the (R)-glutamate required for cell wall biosynthesis. The protein is Glutamate racemase of Streptococcus pyogenes serotype M49 (strain NZ131).